The primary structure comprises 355 residues: Protein RecA (355 aa).

67–74 (GPESSGKT) lines the ATP pocket.

This sequence belongs to the RecA family.

It localises to the cytoplasm. Its function is as follows. Can catalyze the hydrolysis of ATP in the presence of single-stranded DNA, the ATP-dependent uptake of single-stranded DNA by duplex DNA, and the ATP-dependent hybridization of homologous single-stranded DNAs. It interacts with LexA causing its activation and leading to its autocatalytic cleavage. The protein is Protein RecA of Shewanella baltica (strain OS195).